The primary structure comprises 239 residues: MVIKAQSPAGFAEEYIIESIWNNRFAPGTILPAERELSELIGVTRTTLREVLQRLARDGWLTIQHGKPTKVNNFWETSGLNILETLARLDHESVPQLIDNLLSVRTNISTIFIRTAFRQHPDKALEVLATANAIEDHADAFATLDYNIFRGLAFASGNPIYGLIINGMKGLYTRIGRHYFANPEARSLALGFYHKLSEICSEGMHDQVYETVRRYGRDSGEIWHRMQKNLPGDLAIHGH.

The 69-residue stretch at 6–74 (QSPAGFAEEY…HGKPTKVNNF (69 aa)) folds into the HTH gntR-type domain. The segment at residues 34 to 53 (ERELSELIGVTRTTLREVLQ) is a DNA-binding region (H-T-H motif).

Homodimer.

The protein resides in the cytoplasm. Its function is as follows. Multifunctional regulator of fatty acid metabolism. The chain is Fatty acid metabolism regulator protein from Enterobacter sp. (strain 638).